The following is a 365-amino-acid chain: Protein RecA (365 aa).

Gly-77–Thr-84 contacts ATP.

Belongs to the RecA family.

Its subcellular location is the cytoplasm. Can catalyze the hydrolysis of ATP in the presence of single-stranded DNA, the ATP-dependent uptake of single-stranded DNA by duplex DNA, and the ATP-dependent hybridization of homologous single-stranded DNAs. It interacts with LexA causing its activation and leading to its autocatalytic cleavage. The polypeptide is Protein RecA (Mesorhizobium japonicum (strain LMG 29417 / CECT 9101 / MAFF 303099) (Mesorhizobium loti (strain MAFF 303099))).